The primary structure comprises 459 residues: uncharacterized protein (459 aa).

The region spanning 9–67 (KLEVGQTFPVTIKRLGINGEGVGYFKRQVVFIPGALPGEEVVAETTKIQRGFAEAKVKK) is the TRAM domain. Positions 80, 86, 89, and 168 each coordinate [4Fe-4S] cluster. The S-adenosyl-L-methionine site is built by glutamine 292, tyrosine 321, aspartate 342, and aspartate 390. Cysteine 417 functions as the Nucleophile in the catalytic mechanism.

It belongs to the class I-like SAM-binding methyltransferase superfamily. RNA M5U methyltransferase family.

This is an uncharacterized protein from Bacillus cereus (strain ATCC 10987 / NRS 248).